Consider the following 154-residue polypeptide: Myoglobin (154 aa).

The region spanning 2-148 (GLSDGEWTLV…FRNDMAAQYK (147 aa)) is the Globin domain. Residue serine 4 is modified to Phosphoserine. Histidine 65 serves as a coordination point for nitrite. Histidine 65 provides a ligand contact to O2. Threonine 68 carries the phosphothreonine modification. Position 94 (histidine 94) interacts with heme b.

The protein belongs to the globin family. Monomeric.

Its subcellular location is the cytoplasm. The protein resides in the sarcoplasm. It catalyses the reaction Fe(III)-heme b-[protein] + nitric oxide + H2O = Fe(II)-heme b-[protein] + nitrite + 2 H(+). The catalysed reaction is H2O2 + AH2 = A + 2 H2O. Monomeric heme protein which primary function is to store oxygen and facilitate its diffusion within muscle tissues. Reversibly binds oxygen through a pentacoordinated heme iron and enables its timely and efficient release as needed during periods of heightened demand. Depending on the oxidative conditions of tissues and cells, and in addition to its ability to bind oxygen, it also has a nitrite reductase activity whereby it regulates the production of bioactive nitric oxide. Under stress conditions, like hypoxia and anoxia, it also protects cells against reactive oxygen species thanks to its pseudoperoxidase activity. The chain is Myoglobin from Capra hircus (Goat).